The sequence spans 187 residues: MASTSDFKNGLVLQIEGQLWTIIEFQHVKPGKGPAFVRTKLKNVLSGKVVDKTFNAGVKVETATVDRRDMTYLYHDGSDYIFMDGDTYDQVSISESTVGDQSRFLLENMAVQVATHEDVPLFVELPVTVELVVKHTDPGLQGDRSTGGTKPATLETGAEINVPLFINTGDKLKVDSRDGNYLGRVNS.

Belongs to the elongation factor P family.

It localises to the cytoplasm. It participates in protein biosynthesis; polypeptide chain elongation. Functionally, involved in peptide bond synthesis. Stimulates efficient translation and peptide-bond synthesis on native or reconstituted 70S ribosomes in vitro. Probably functions indirectly by altering the affinity of the ribosome for aminoacyl-tRNA, thus increasing their reactivity as acceptors for peptidyl transferase. This is Elongation factor P from Rhodococcus erythropolis (strain PR4 / NBRC 100887).